The following is a 383-amino-acid chain: Neuropeptide Y receptor type 1 (383 aa).

Over 1 to 44 (MNSTLSSQVENHSIYYNFSEKNSQFLAFENDDCHLPLAMIFTLA) the chain is Extracellular. Residues Asn2, Asn11, and Asn17 are each glycosylated (N-linked (GlcNAc...) asparagine). The chain crosses the membrane as a helical span at residues 45 to 65 (LAYGAVIILGVSGNLALIIII). Residues 66-76 (LKQKEMRNVTN) are Cytoplasmic-facing. The chain crosses the membrane as a helical span at residues 77 to 97 (ILIVNLSFSDLLVAIMCLPFT). The Extracellular segment spans residues 98–116 (FVYTLMDHWVFGEVMCKLN). Cys113 and Cys198 are joined by a disulfide. A helical membrane pass occupies residues 117–137 (PFVQCVSITVSIFSLVLIAVE). Topologically, residues 138 to 154 (RHQLIINPRGWRPSNRH) are cytoplasmic. A helical transmembrane segment spans residues 155–175 (AYVGIAVIWVLAVASSLPFLI). Residues 176 to 211 (YQVLTDEPFQNVTLDAFKDKYVCFDKFLSDSHRLSY) are Extracellular-facing. A helical membrane pass occupies residues 212-232 (TTLLLVLQYFGPLCFIFICYF). At 233–260 (KIYIRLKRRNNMMDKMRDNKYRSSETKR) the chain is on the cytoplasmic side. A helical membrane pass occupies residues 261 to 281 (INVMLLSIVVAFAVCWLPLTI). At 282–299 (FNTVFDWNHQIIATCNHN) the chain is on the extracellular side. The chain crosses the membrane as a helical span at residues 300-320 (LLFLLCHLTAMISTCINPIFY). The Cytoplasmic portion of the chain corresponds to 321–383 (GFLNKNFQRD…KIHSDDNEKI (63 aa)). Residue Cys338 is the site of S-palmitoyl cysteine attachment. Ser368 carries the post-translational modification Phosphoserine.

The protein belongs to the G-protein coupled receptor 1 family.

Its subcellular location is the cell membrane. Functionally, receptor for neuropeptide Y and peptide YY. This is Neuropeptide Y receptor type 1 (NPY1R) from Sus scrofa (Pig).